The chain runs to 1497 residues: MAYSIANNHLLRKNFATIKNIIDIPNLIDIQKNSYRRFLQSDVPLDLRKNIGLEAVFRSVFPIKDFSETSSLEYVSYTLSKPKYDVEECHQRGMTYAAPMKVKVRLVIWDSGKESGVRGVKDIKEQEVYFGEIPLMTENGTFIINGTERVIVSQLHRSPGVFFDHDKGKTHSSGKVLYSARVIPYRGSWLDFEFDHKDILFVRIDRRRKMPATVLLKALGYSVEHLLNYYYKSEQIYIAAGELRKGIEPELLTMQKAVVDVADANGEVIVKANRKFTKASIKKLLDHGVTSIPTSSESIIGRYASADVVDPVTGEILLECNQELTADKLDELRQKEVTTFNLLYIDGLNVTSSFRDTLLADKISSSDEALIEIYRRLRPGDPPTLKSSLALFDNLFFNPERYDLSAVGRLKLNFKLGLKVWPDCTILNGPTMLTAAELQNAEQLIGSLLNGTRPVDLALKDRLSSDLTKSLKKLDLKQPVPERLLEQLADELNSAVANAEFFQRDLIAGLELPESFIKLMDLIEQGGYDENRRRIEGLRRNRMLLEVAYGDSVECCNRNDILEIVRYLIELKNGRGAIDDIDHLGNRRVRAVGELLENQYRIGLVRMERAIKERMSLQEVENLMPHDLINSKPVSAVVKEFFGSSQLSQFMDQTNPLSEVTHKRRLSALGPGGLTRERAGFEVRDVHPTHYGRVCPIETPEGPNIGLIASLSTYARINEHGFVETPYRLVREGQVTSEVKFFSALEEEGHAIAQANALVDQDGRFINEYVSARKSGEFVLVQRDEIELMDVAPKQLVSVAAALIPFLENDDANRALMGSNMQRQAVPLLRADSPLVGTGMERIVAKDSGVSVIARHNGVVDAVDAGRIVIKIDEEEYDETGTGVDIYNLVKFSRSNQNTCINQKPVVKVGDKVKRGDVIADGPSTDMGELALGQNIIVAFMPWGGYNFEDSILVSERLTKDDRYTSIHIEEFECVARDTKLGKEEITADIPNLGEEALKDLDESGIIRIGAEVKPGDILVGKITPKGETQLSPEEKLLRAIFGEKAGDVRDTSLTIPPGVEGTVIGAKVFSRKGNDKDARTELIEKIEEEKLRKDEQDEVRIIRDSARGKLKRLLVGKTAGAKIEDRHGVTVLAKGKKITDELLESLTMDRWATISVSDGTDVEEKVAEVLSKLNEQVELIRGVFDDKVQKLRRGDDLPPGVIKMVKVYVAIKRKLQVGDKMAGRHGNKGVVSRILPEEDMPYMDDGRPVEIVLNPLGVPSRMNVGQILETHLGWAAKGLGWKIQKMLEEHTSEENLKKFIRETYDNADFNKILDTMDREELLLVARRLSRGVPMASPVFEGAGEAKIKELLTRAGFATNGQVTLFDGRTGEPFKHKVTVGIMYVLKLHHLVDDKIHARSIGPYSLVTQQPLGGKAQFGGQRLGEMEVWAMEAYGCSYALQEFLTVKSDDVSGRTRMYEAIVKGKHTLEPGLPESFNVLIKELQSLCLDVELLEGDE.

This sequence belongs to the RNA polymerase beta chain family. The RNAP catalytic core consists of 2 alpha, 1 beta, 1 beta' and 1 omega subunit. When a sigma factor is associated with the core the holoenzyme is formed, which can initiate transcription.

It catalyses the reaction RNA(n) + a ribonucleoside 5'-triphosphate = RNA(n+1) + diphosphate. Functionally, DNA-dependent RNA polymerase catalyzes the transcription of DNA into RNA using the four ribonucleoside triphosphates as substrates. In Trichlorobacter lovleyi (strain ATCC BAA-1151 / DSM 17278 / SZ) (Geobacter lovleyi), this protein is DNA-directed RNA polymerase subunit beta.